A 77-amino-acid chain; its full sequence is Large ribosomal subunit protein bL28 (77 aa).

Belongs to the bacterial ribosomal protein bL28 family.

In Acidovorax ebreus (strain TPSY) (Diaphorobacter sp. (strain TPSY)), this protein is Large ribosomal subunit protein bL28.